A 501-amino-acid chain; its full sequence is Dynein regulatory complex subunit 5 (501 aa).

The segment covering 1 to 23 (MQETVTTSALLDPSHSSVSTQDK) has biased composition (polar residues). Disordered regions lie at residues 1-56 (MQET…HPGA) and 203-222 (PAQLRPGDQSDSGSEGEMEE). A compositionally biased stretch (low complexity) spans 24 to 34 (SSTGGHTSSTG). Over residues 35–49 (PQPSKPSITPVSAKS) the composition is skewed to polar residues. LRR repeat units follow at residues 308-321 (VLEELDLSHNLIGD), 335-355 (RLRVLNLANNQVRAPGAQSLA), 363-383 (NLISLNLRLNCIEDEGGQALA), 391-411 (CLTTLHLGGNELSEPTATLLS), and 419-439 (TLTSINLSCNHIGLDGGKQLL).

It belongs to the DRC5 family. In terms of assembly, component of the nexin-dynein regulatory complex (N-DRC). Interacts with DRC1. Interacts with FBXL13/DRC6, DRC3 and DRC7.

The protein resides in the cell projection. The protein localises to the cilium. Its subcellular location is the flagellum. It localises to the cytoplasm. It is found in the cytoskeleton. The protein resides in the flagellum axoneme. Component of the nexin-dynein regulatory complex (N-DRC) a key regulator of ciliary/flagellar motility which maintains the alignment and integrity of the distal axoneme and regulates microtubule sliding in motile axonemes. May play a role in the assembly of N-DRC. May be required for sperm motility. This is Dynein regulatory complex subunit 5 (TCTE1) from Macaca fascicularis (Crab-eating macaque).